The following is a 201-amino-acid chain: MSIQHFQRKLGITKYSIVTNSNDSVTLRLMTEHDLAMLYEWLNRSHIVEWWGGEEARPTLADVQEQYLPSVLAQESVTPYIAMLNGEPIGYAQSYVALGSGDGWWEEETDPGVRGIDQLLANASQLGKGLGTKLVRALVELLFNDPEVTKIQTDPSPSNLRAIRCYEKAGFERQGTVTTPDGPAVYMVQTRQAFERTRRFA.

The N-acetyltransferase domain occupies 25-192; it reads VTLRLMTEHD…PAVYMVQTRQ (168 aa). Positions 51 and 154 each coordinate substrate. Acetyl-CoA is bound at residue Asn159.

Homodimer.

It carries out the reaction kanamycin B + acetyl-CoA = N(6')-acetylkanamycin B + CoA + H(+). Functionally, catalyzes the transfer of an acetyl group from acetyl-CoA to the 6'-amino group of aminoglycoside molecules conferring resistance to antibiotics containing the purpurosamine ring including amikacin and kanamycin. This Serratia marcescens protein is Aminoglycoside N(6')-acetyltransferase type 1 (aacA4).